A 342-amino-acid polypeptide reads, in one-letter code: Cathepsin B-like cysteine proteinase 2 (342 aa).

Residues 1–18 form the signal peptide; sequence MKYLVLALCTYLCSQSGA. Residues 19–86 constitute a propeptide, activation peptide; it reads DENAAQGIPL…VKEDPDPEVD (68 aa). N-linked (GlcNAc...) asparagine glycosylation occurs at asparagine 99. Intrachain disulfides connect cysteine 100/cysteine 128, cysteine 111/cysteine 156, cysteine 147/cysteine 214, cysteine 148/cysteine 152, cysteine 185/cysteine 218, and cysteine 193/cysteine 205. Cysteine 114 is a catalytic residue. Residue asparagine 138 is glycosylated (N-linked (GlcNAc...) asparagine). N-linked (GlcNAc...) asparagine glycosylation is present at asparagine 198. Residue histidine 285 is part of the active site. The N-linked (GlcNAc...) asparagine glycan is linked to asparagine 296. Asparagine 305 is a catalytic residue.

The protein belongs to the peptidase C1 family.

Expression of the protease correlates with blood-feeding and suggests a role for the protease in blood digestion. The chain is Cathepsin B-like cysteine proteinase 2 (AC-2) from Haemonchus contortus (Barber pole worm).